The sequence spans 772 residues: Probable adenosine deaminase (772 aa).

2 residues coordinate Zn(2+): His22 and His24. The substrate site is built by His24, Asp26, and Gly180. His207 is a binding site for Zn(2+). Glu210 functions as the Proton donor in the catalytic mechanism. Asp288 contacts Zn(2+).

The protein belongs to the metallo-dependent hydrolases superfamily. Adenosine and AMP deaminases family. The cofactor is Zn(2+).

It carries out the reaction adenosine + H2O + H(+) = inosine + NH4(+). Functionally, catalyzes the hydrolytic deamination of adenosine. Plays an important role in purine metabolism and in adenosine homeostasis, and may thereby contribute to cellular signaling events. In Dictyostelium discoideum (Social amoeba), this protein is Probable adenosine deaminase (ada).